A 319-amino-acid polypeptide reads, in one-letter code: tRNA pseudouridine synthase B (319 aa).

D47 acts as the Nucleophile in catalysis.

Belongs to the pseudouridine synthase TruB family. Type 1 subfamily.

It carries out the reaction uridine(55) in tRNA = pseudouridine(55) in tRNA. Responsible for synthesis of pseudouridine from uracil-55 in the psi GC loop of transfer RNAs. The polypeptide is tRNA pseudouridine synthase B (Pseudoalteromonas translucida (strain TAC 125)).